Reading from the N-terminus, the 421-residue chain is Expansin-like protein DDB_G0293186 (421 aa).

An N-terminal signal peptide occupies residues 1-20; sequence MRTLKLIILLILSTFKTINS. N19 is a glycosylation site (N-linked (GlcNAc...) asparagine). One can recognise an Expansin-like EG45 domain in the interval 43 to 139; the sequence is GGQCGLPLPG…QKVSCGFSGY (97 aa). 2 disulfides stabilise this stretch: C46/C70 and C73/C134. 2 N-linked (GlcNAc...) asparagine glycosylation sites follow: N117 and N391.

The protein belongs to the expansin family. Expansin A subfamily.

It localises to the secreted. In terms of biological role, may serve to lubricate the movement of the cellulose microfibrils during cell growth and wall extension and/or may serve to maintain the fluid state of the slug cell wall. This is Expansin-like protein DDB_G0293186 from Dictyostelium discoideum (Social amoeba).